A 912-amino-acid polypeptide reads, in one-letter code: Protein translocase subunit SecA (912 aa).

ATP is bound by residues glutamine 87, 105–109 (GEGKT), and aspartate 508. The interval 865–912 (DEEAAQVQSGNAPVPVSQVTRDEPKVGRNDPCPCGSGKKYKHCHGQLS) is disordered. The Zn(2+) site is built by cysteine 896, cysteine 898, cysteine 907, and histidine 908. Positions 902–912 (KKYKHCHGQLS) are enriched in basic residues.

Belongs to the SecA family. Monomer and homodimer. Part of the essential Sec protein translocation apparatus which comprises SecA, SecYEG and auxiliary proteins SecDF-YajC and YidC. It depends on Zn(2+) as a cofactor.

Its subcellular location is the cell inner membrane. The protein resides in the cytoplasm. It catalyses the reaction ATP + H2O + cellular proteinSide 1 = ADP + phosphate + cellular proteinSide 2.. In terms of biological role, part of the Sec protein translocase complex. Interacts with the SecYEG preprotein conducting channel. Has a central role in coupling the hydrolysis of ATP to the transfer of proteins into and across the cell membrane, serving both as a receptor for the preprotein-SecB complex and as an ATP-driven molecular motor driving the stepwise translocation of polypeptide chains across the membrane. This chain is Protein translocase subunit SecA, found in Xanthomonas oryzae pv. oryzae (strain MAFF 311018).